The sequence spans 2556 residues: MAVANHEEAEATTVLLFGPQALSFTEESFQRIRVALNDTENAWMRQVVEELPECTSRVAKQFPKLQATPAAKLQNSLRDWLRIDEGVAPAASKSLPNALLTPLVVLDHLAQYSQYVQLAHVETGLGTDRYGPQSRPTRNLGFCTGLLSALAVSSASNKAEFRKYAAVAVRLAAVIGALVDAEDAIGHHGESKTFSAAYHSSKQESELQSILQDFPEDADSTGNLQAYISVNYDEGRATITTSNRTAQAFQQRLREAGITAQAIGLRGRFHYQGYQQDLARLVEICDATPELRLPDVTDAVIPIHSLSGGGLITEGRLHHIALREILVEQSQWGKTFDAMSRSSLANTQSLLVSFGFEKCVPPSAMPRVGGQVVYMTDQRDARLRLSAVKTPGEMVSEDEIAVIGMAIKVAGADDADEFWDLNLTAESQHREVPAERFTFETHWRTVDPARKWYGNFVRDHDAFDHKFFQKSPREATTQDPQQRIFLQSAYQAVEQSGYFNSLHADRNVGVSVITLDGMGMDTSLYPTLYQVDSGECTAALAGGTNIMTSPLWFQNLAGASFLSQTGPCKPFDAKADGYCRGEGVACVFLKKMTKAIEDGNTIIGSIRSTAVYQNDNCTPIFVPNAPSLSGLFDDVVRKSGLSPKDITLVEAHGTGTPVGDPAEWDSIRKTLGGRSVRSVPMPVGSVKGLIGHTECTSGVVALIKVLLLIHYGIIPPQASFQTLSPALKATADDMLEVCTKQTPWNVEYRAALINNYGASGSNASMIVTQPPKLRGNGPFSPPTDGGKYAFWLTGLDERSLRDYARRLSGFLASKKISSLSSLSFNAYRQSNRALPHGLIFSSSSMEELQTQLTDFAKGNGKLSATTRKPVRPVILCFGGQISRFVGLDKAVYESIGTLRTHLDRCDATLQSLGLDGLYPGIFERSQVDDPVKLQTMLFALQYSCAKCWLDCGLQPVAVVGHSFGELTALCIAGVLTLRDSLQVVAMRAQLIKSSWGPDPGAMMAVEGNLADVQTLLKNAERACPEETPATVACFNGPTTFTLAGSTKAIDAVSECISSVSVVRGKKLSVSNAFHSTLVEPLKDQLGQLAEGMIFGEAKIRWERATENQTSANIGPEFFASHMRDPVYANHALQRLHREFPSAIWLEAGSNSTITRMANKALGFPAESYFADINITSDSASNTLTESFVNLWKEGLAIPHWAHHCTQAPAYSTLLLPPYQFEKSRHWLELKKPQAVQLIELPSKAQQEELPTKLYTFVGYQDEGKRQARFRVNTMIKAYEEFVSGHLIVQTAAICPATLEVDITIEALFTLCPDFKATGLQPQVANVENLVPICVDPSRVLWLDLRATTSDFKSWEWQMVSTNEKGESKSTHVKGQIIFQSAAEAQAEFSRYERLVPHRRCTEILNDSDPDDVLQGRNMYKVFAEIVDYSEPYRGLRKLVGKGTTSAGRVVKQRSGETWLDTHISDCFSQVGGFWVNCMTDRSASDMYIAAGFESWIRRPGSTAAQDDPEKTSVWDVMACHVKASEKAYTTDIFIFDATSGLLSEIILGINYSRLPKSTMSKMLTKLTAPSERRAQVDSPSMPASINAPPSASEQAPVEPAPQTKESAPIAEPGAGGQSNSKVPGIVVEVLAELSGVEPDAIKMSTKLADIGIDSLVGMEMVHDLESKCECSLDMDEMAEVVTVNDVVQCVHKTLGIEGGSAAQESEGNLTPASSGTQSPRSDPVSDTSLSDLEQLPRKESDLELQLSASDVLGAFGETKKLTDQFITDFNCAGYMDNINPKQTQLCIALTIEAFEKLGCNLRTAKAGEALPRISHAPQHGRLTQYLYDMLEHEGRLIDIDGDRIVRTAVSVPHKSSKEILASLEAAYPEHVCANRLAFFCGTRLVEVLEGKLDGVKLIFGNEEGRQLVAGLYGDTQLNRIFYKQMEDILTRLISRIPRDSGPLRILEMGAGTGGTTKYLVPLLAKLGAPVEYTFTDLAPSFVAAARRQYKAYPFMKFHAHDIEQEPAQDLLGTQHIIIASNAVHATHSLTVSAKNMRKALRPDGFLMMLEMTQTVPWVDIIFGLLEGWWLFDDGRQHAISPESRWEKDLQSVGYGHIDWTDGHLAENKLQRIIIAMASGPQGGRLPLPAPPIAQSTSNITERATAVEGYVDRFTSGFAMQPLASAPGTTVRKDSAQCVLVTGATGSLGAHLVKELLGRSDVATVICLNRLSRGTNPEQRQYRSFEEKGLKLDSSQSAKLRIIETDTSKPLLGLSAEQYEEVAHMVTAIVHNAWPMSGARPLRGFEAQFSVMRNLIDLARDAAYVSQTITFQFISSIAVVGHYPLWSRERNVPEERVGIESILPNGYGDAKYVCERMLDATLHKYPDHFRAMGVRLGQVAGSSETGYWNSLEHLSFLVKSSQTLRALPDFQGELSWTPVDVVASTLADLVSYAAADFSAASTVYPIYHIDNPVRQPWKEMISVLARALDIPPANVLPFPEWVRRVRRFPGSTEKDNPAFKLIDFLDDNFVRMSCGGLLLDTRHTQQHSPTLAAQGPVSNQVAEGYIRYWKRTGFLAG.

Residues 16-270 form an N-terminal acylcarrier protein transacylase domain (SAT) region; the sequence is LFGPQALSFT…QAIGLRGRFH (255 aa). Cys-143 functions as the Nucleophile; for transacylase activity in the catalytic mechanism. His-270 acts as the Proton donor/acceptor; for transacylase activity in catalysis. The region spanning 397-769 is the Ketosynthase family 3 (KS3) domain; it reads EDEIAVIGMA…GSNASMIVTQ (373 aa). The tract at residues 876–1209 is malonyl-CoA:ACP transacylase (MAT) domain; sequence CFGGQISRFV…WAHHCTQAPA (334 aa). The tract at residues 1254–1383 is N-terminal hotdog fold; the sequence is YTFVGYQDEG…GQIIFQSAAE (130 aa). The PKS/mFAS DH domain maps to 1254–1560; that stretch reads YTFVGYQDEG…YSRLPKSTMS (307 aa). The segment at 1257–1564 is product template (PT) domain; that stretch reads VGYQDEGKRQ…PKSTMSKMLT (308 aa). His-1285 (proton acceptor; for dehydratase activity) is an active-site residue. Residues 1408 to 1560 are C-terminal hotdog fold; the sequence is DPDDVLQGRN…YSRLPKSTMS (153 aa). The Proton donor; for dehydratase activity role is filled by Asp-1465. A disordered region spans residues 1567-1621; the sequence is TAPSERRAQVDSPSMPASINAPPSASEQAPVEPAPQTKESAPIAEPGAGGQSNSK. Polar residues predominate over residues 1577–1593; it reads DSPSMPASINAPPSASE. The Carrier domain occupies 1620-1694; that stretch reads SKVPGIVVEV…DVVQCVHKTL (75 aa). At Ser-1654 the chain carries O-(pantetheine 4'-phosphoryl)serine. Positions 1700–1731 are disordered; sequence SAAQESEGNLTPASSGTQSPRSDPVSDTSLSD. The segment covering 1702-1731 has biased composition (polar residues); that stretch reads AQESEGNLTPASSGTQSPRSDPVSDTSLSD. A methyltransferase domain region spans residues 1830-2107; sequence LEHEGRLIDI…DWTDGHLAEN (278 aa). An NADPH-binding (R) domain region spans residues 2180-2424; that stretch reads VTGATGSLGA…WTPVDVVAST (245 aa).

The cofactor is pantetheine 4'-phosphate.

Its pathway is secondary metabolite biosynthesis. Non-reducing polyketide synthase; part of the gene cluster that mediates the biosynthesis of azaterrilone A and other azaphilones, a class of fungal metabolites characterized by a highly oxygenated pyrano-quinone bicyclic core and exhibiting a broad range of bioactivities. The first step of the pathway begins with tazA that assembles one acetyl-CoA starter unit, five malonyl-CoA units, and catalyzes a series of Claisen condensations, methylation, PT-mediated cyclization, and finally releases the first hexaketide precursor through the R-domain. The tazA product then undergoes reduction on its terminal ketone and the following pyran-ring formation by yet undetermined enzyme(s). Dehydration and enoyl reduction, possibly involving the trans-enoyl reductase tazE leads to the next intermediate. TazD is predicted as an acetyltransferase and might catalyze the acetylation steps leading to the synthesis of azaterrilone A. Azaterrilone A is not the final product of the taz pathway and both the highly reducing polyketide synthase tazB and the dual enzyme tazHJ catalyze late steps of the pathway, leading to the production of the 2 final stereoisomers that contain additional polyketide modification whose structures have still to be determined. This is Non-reducing polyketide synthase tazA from Aspergillus terreus (strain NIH 2624 / FGSC A1156).